We begin with the raw amino-acid sequence, 456 residues long: Adenylosuccinate lyase (456 aa).

N(6)-(1,2-dicarboxyethyl)-AMP is bound by residues 15–16 and 90–92; these read RY and NHD. Position 94 is an N6-acetyllysine (lysine 94). A N(6)-(1,2-dicarboxyethyl)-AMP-binding site is contributed by 122–123; it reads TS. Histidine 171 acts as the Proton donor/acceptor in catalysis. Residue glutamine 247 participates in N(6)-(1,2-dicarboxyethyl)-AMP binding. Serine 295 (proton donor/acceptor) is an active-site residue. Residues serine 296, 301-303, asparagine 309, arginine 335, and 340-344 each bind N(6)-(1,2-dicarboxyethyl)-AMP; these read KVN and STVLR. Residue lysine 366 is modified to N6-acetyllysine.

It belongs to the lyase 1 family. Adenylosuccinate lyase subfamily. As to quaternary structure, homotetramer. Residues from neighboring subunits contribute catalytic and substrate-binding residues to each active site.

The enzyme catalyses N(6)-(1,2-dicarboxyethyl)-AMP = fumarate + AMP. The catalysed reaction is (2S)-2-[5-amino-1-(5-phospho-beta-D-ribosyl)imidazole-4-carboxamido]succinate = 5-amino-1-(5-phospho-beta-D-ribosyl)imidazole-4-carboxamide + fumarate. The protein operates within purine metabolism; AMP biosynthesis via de novo pathway; AMP from IMP: step 2/2. Its pathway is purine metabolism; IMP biosynthesis via de novo pathway; 5-amino-1-(5-phospho-D-ribosyl)imidazole-4-carboxamide from 5-amino-1-(5-phospho-D-ribosyl)imidazole-4-carboxylate: step 2/2. Functionally, catalyzes two reactions in de novo purine nucleotide biosynthesis. Catalyzes the breakdown of 5-aminoimidazole- (N-succinylocarboxamide) ribotide (SAICAR or 2-[5-amino-1-(5-phospho-beta-D-ribosyl)imidazole-4-carboxamido]succinate) to 5-aminoimidazole-4-carboxamide ribotide (AICAR or 5-amino-1-(5-phospho-beta-D-ribosyl)imidazole-4-carboxamide) and fumarate, and of adenylosuccinate (ADS or N(6)-(1,2-dicarboxyethyl)-AMP) to adenosine monophosphate (AMP) and fumarate. This Escherichia coli O6:H1 (strain CFT073 / ATCC 700928 / UPEC) protein is Adenylosuccinate lyase (purB).